The chain runs to 860 residues: MPAKASLEGIEKVWSRVWEQNGTYRFDRSVTRSEVYSVDTPPPTVSGALHVGHVFSYTHSDAIARFQRMRGRAVFYPMGWDDNGLPTERRVQNYYGVRCDPSLPYDPGYTPPAEPPSRPQPISRRNFVELCRNLTELDEQAFEALWRHLGLSVDWSLTYATIDDRSRAISQRAFLRNLARGEAYLADAPTLWDVTFRTAVAQAELEDRERQGTYYRLAFHSATGDKIYVETTRPELLPACVALVAHPDDERYQHLLGSTAVSPLFGVPVPIRAHPLAQPDKGSGIAMICTFGDLTDVLWWRELALPTRPVMGRDGRLLPEPPPGIVNADAVAAYQTLAGLTAFSAKAKVVELLRAAGDLEIAPRPTTQTVKFYEKGDKPLEIITTRQWYVRNGGRDTELRSALVHRGRELTWSPEFMRSRYENWVEGLSGDWVISRQRFFGVPIPVWYPLDDSGEPDYAHPILPDDVALPVDPSSDAPTGYQESQRNQPGGFMADPDVMDTWATSSLTPEIAGGWTVDDDLFARVFPMDLRPQAHEIIRTWLFATVLRSHQEFNCLPWTTVLLSGWILDPDRKKMSKSKGNTVTPMALLEKYGSDAVRYWAVSGRPGTDTAFDTGQMKIGRRLAIKILNATTFVLRFGSPTLLAPHMAHVTEPLDRSMLARLASVVDSATTGFTQHDYTRSLECTEQFFWSFCDDYLELVKERAYGEPDDRAVRSAHAALALALHTLLRLFAPMLPFVTEEAWSWWQEGSVHRAAWPTGQELVGPDVSAEANRSTEASGSGEAGTDLLGLASDVLAAIRRAKSEAKQSMRAPVAQLTLRGRASDLAAFALVSRDVRAAGVVREVDTAEADTPLTPEITLG.

The 'HIGH' region motif lies at 43 to 53 (PTVSGALHVGH). The segment at 469-491 (LPVDPSSDAPTGYQESQRNQPGG) is disordered. A 'KMSKS' region motif is present at residues 574-578 (KMSKS). Lys-577 provides a ligand contact to ATP.

It belongs to the class-I aminoacyl-tRNA synthetase family. ValS type 2 subfamily. Monomer.

It is found in the cytoplasm. The catalysed reaction is tRNA(Val) + L-valine + ATP = L-valyl-tRNA(Val) + AMP + diphosphate. Functionally, catalyzes the attachment of valine to tRNA(Val). As ValRS can inadvertently accommodate and process structurally similar amino acids such as threonine, to avoid such errors, it has a 'posttransfer' editing activity that hydrolyzes mischarged Thr-tRNA(Val) in a tRNA-dependent manner. The protein is Valine--tRNA ligase of Salinispora tropica (strain ATCC BAA-916 / DSM 44818 / JCM 13857 / NBRC 105044 / CNB-440).